A 168-amino-acid chain; its full sequence is Cofilin-1-A (168 aa).

Position 2 is an N-acetylalanine (Ala-2). An ADF-H domain is found at 4–153; sequence GVMVSDDVIK…NDPCNLADKL (150 aa). The short motif at 30 to 34 is the Nuclear localization signal element; sequence KKRKK.

This sequence belongs to the actin-binding proteins ADF family. Inactive when phosphorylated. Phosphorylation levels vary during development. Oocytes contain only the phosphorylated form, and 80-95% of cfl1 protein is phosphorylated in unfertilized eggs. Rapid dephosphorylation occurs within 30 minutes after fertilization. Phosphorylation levels increase again between the morula and blastula stages (5-8 hpf) and then decrease again as gastrulation approaches. Dephosphorylated by pdxp. Expressed diffusely in both animal and vegetal hemispheres of the oocyte. During cleavage, expression accumulates around the cleavage furrow, along the vegetal membrane, and later in the midbody. Strongly expressed in the animal hemisphere during blastula stages, with most cells showing expression by gastrulation. By stage 17, expression is highest in cells of the developing neuroectoderm, and at stage 24 the notochord, neural tube, neural crest, somites and some cells of the archenteron show high expression. By stage 35, expression has declined in the notochord, but remains in the neural tube, epidermis and a layer of cells in the archenteron. Also highly expressed in the retina and neuronal cell bodies at the base of the cement gland but not the cement gland itself. At stage 38, expression is widespread, being highest in the nervous system and retina. In the adult, expression is high in the brain, heart, oocyte, stomach, and low in skeletal muscle.

The protein resides in the nucleus matrix. It is found in the cytoplasm. Its subcellular location is the cytoskeleton. The protein localises to the cell cortex. It localises to the membrane. In terms of biological role, may play a role in the regulation of cell morphology and cytoskeletal organization. Binds to F-actin and exhibits pH-sensitive F-actin depolymerizing activity. Required for formation of the cleavage furrow during cytokinesis. In Xenopus laevis (African clawed frog), this protein is Cofilin-1-A (cfl1-a).